Here is a 618-residue protein sequence, read N- to C-terminus: UvrABC system protein C (618 aa).

The region spanning 20–98 is the GIY-YIG domain; the sequence is TAPGVYRMYA…IKSLSPRYNV (79 aa). One can recognise a UVR domain in the interval 207–242; that stretch reads DQLGEEIMQSMQQASEALEFERAARLRDLLSSLRSM.

This sequence belongs to the UvrC family. In terms of assembly, interacts with UvrB in an incision complex.

Its subcellular location is the cytoplasm. Functionally, the UvrABC repair system catalyzes the recognition and processing of DNA lesions. UvrC both incises the 5' and 3' sides of the lesion. The N-terminal half is responsible for the 3' incision and the C-terminal half is responsible for the 5' incision. The polypeptide is UvrABC system protein C (Xanthomonas oryzae pv. oryzae (strain MAFF 311018)).